Here is an 803-residue protein sequence, read N- to C-terminus: Leucine--tRNA ligase (803 aa).

The short motif at 40-51 (PYPSGQGLHVGH) is the 'HIGH' region element. Residues 575 to 579 (KMSKS) carry the 'KMSKS' region motif. Residue Lys-578 participates in ATP binding.

This sequence belongs to the class-I aminoacyl-tRNA synthetase family.

It localises to the cytoplasm. It catalyses the reaction tRNA(Leu) + L-leucine + ATP = L-leucyl-tRNA(Leu) + AMP + diphosphate. In Lacticaseibacillus paracasei (strain ATCC 334 / BCRC 17002 / CCUG 31169 / CIP 107868 / KCTC 3260 / NRRL B-441) (Lactobacillus paracasei), this protein is Leucine--tRNA ligase.